We begin with the raw amino-acid sequence, 339 residues long: Ferrochelatase (339 aa).

Positions 202 and 283 each coordinate Fe cation.

It belongs to the ferrochelatase family.

It localises to the cytoplasm. It carries out the reaction heme b + 2 H(+) = protoporphyrin IX + Fe(2+). The protein operates within porphyrin-containing compound metabolism; protoheme biosynthesis; protoheme from protoporphyrin-IX: step 1/1. In terms of biological role, catalyzes the ferrous insertion into protoporphyrin IX. The chain is Ferrochelatase from Psychrobacter sp. (strain PRwf-1).